The chain runs to 336 residues: Biotin synthase (336 aa).

Residues 52–279 enclose the Radical SAM core domain; the sequence is KAIQLSTLMS…KSYVRLSAGR (228 aa). 3 residues coordinate [4Fe-4S] cluster: cysteine 67, cysteine 71, and cysteine 74. Cysteine 111, cysteine 142, cysteine 202, and arginine 274 together coordinate [2Fe-2S] cluster.

The protein belongs to the radical SAM superfamily. Biotin synthase family. As to quaternary structure, homodimer. [4Fe-4S] cluster serves as cofactor. [2Fe-2S] cluster is required as a cofactor.

It carries out the reaction (4R,5S)-dethiobiotin + (sulfur carrier)-SH + 2 reduced [2Fe-2S]-[ferredoxin] + 2 S-adenosyl-L-methionine = (sulfur carrier)-H + biotin + 2 5'-deoxyadenosine + 2 L-methionine + 2 oxidized [2Fe-2S]-[ferredoxin]. It participates in cofactor biosynthesis; biotin biosynthesis; biotin from 7,8-diaminononanoate: step 2/2. Catalyzes the conversion of dethiobiotin (DTB) to biotin by the insertion of a sulfur atom into dethiobiotin via a radical-based mechanism. The protein is Biotin synthase of Pasteurella multocida (strain Pm70).